We begin with the raw amino-acid sequence, 426 residues long: Glutamyl-tRNA reductase (426 aa).

Residues Thr-49 to Arg-52, Ser-109, Glu-114 to Gln-116, and Gln-120 contribute to the substrate site. Cys-50 (nucleophile) is an active-site residue. Gly-189–Gly-194 contacts NADP(+).

It belongs to the glutamyl-tRNA reductase family. In terms of assembly, homodimer.

The catalysed reaction is (S)-4-amino-5-oxopentanoate + tRNA(Glu) + NADP(+) = L-glutamyl-tRNA(Glu) + NADPH + H(+). Its pathway is porphyrin-containing compound metabolism; protoporphyrin-IX biosynthesis; 5-aminolevulinate from L-glutamyl-tRNA(Glu): step 1/2. It functions in the pathway porphyrin-containing compound metabolism; chlorophyll biosynthesis. In terms of biological role, catalyzes the NADPH-dependent reduction of glutamyl-tRNA(Glu) to glutamate 1-semialdehyde (GSA). The chain is Glutamyl-tRNA reductase from Chlorobium phaeobacteroides (strain BS1).